The primary structure comprises 365 residues: tRNA/tmRNA (uracil-C(5))-methyltransferase (365 aa).

S-adenosyl-L-methionine-binding residues include Gln189, Tyr217, Asn222, Glu238, and Asp298. Cys323 (nucleophile) is an active-site residue. Glu357 (proton acceptor) is an active-site residue.

It belongs to the class I-like SAM-binding methyltransferase superfamily. RNA M5U methyltransferase family. TrmA subfamily.

The enzyme catalyses uridine(54) in tRNA + S-adenosyl-L-methionine = 5-methyluridine(54) in tRNA + S-adenosyl-L-homocysteine + H(+). The catalysed reaction is uridine(341) in tmRNA + S-adenosyl-L-methionine = 5-methyluridine(341) in tmRNA + S-adenosyl-L-homocysteine + H(+). Its function is as follows. Dual-specificity methyltransferase that catalyzes the formation of 5-methyluridine at position 54 (m5U54) in all tRNAs, and that of position 341 (m5U341) in tmRNA (transfer-mRNA). The protein is tRNA/tmRNA (uracil-C(5))-methyltransferase of Shewanella baltica (strain OS185).